The chain runs to 167 residues: NAD(P)H-quinone oxidoreductase subunit I, chloroplastic (167 aa).

4Fe-4S ferredoxin-type domains follow at residues 55–84 (GRIHFEFDKCIACEVCVRVCPIDLPVVDWK) and 95–124 (LNYSIDFGICIFCGNCVEYCPTNCLSMTEE). 8 residues coordinate [4Fe-4S] cluster: C64, C67, C70, C74, C104, C107, C110, and C114.

Belongs to the complex I 23 kDa subunit family. In terms of assembly, NDH is composed of at least 16 different subunits, 5 of which are encoded in the nucleus. Requires [4Fe-4S] cluster as cofactor.

The protein resides in the plastid. It is found in the chloroplast thylakoid membrane. It carries out the reaction a plastoquinone + NADH + (n+1) H(+)(in) = a plastoquinol + NAD(+) + n H(+)(out). The catalysed reaction is a plastoquinone + NADPH + (n+1) H(+)(in) = a plastoquinol + NADP(+) + n H(+)(out). Its function is as follows. NDH shuttles electrons from NAD(P)H:plastoquinone, via FMN and iron-sulfur (Fe-S) centers, to quinones in the photosynthetic chain and possibly in a chloroplast respiratory chain. The immediate electron acceptor for the enzyme in this species is believed to be plastoquinone. Couples the redox reaction to proton translocation, and thus conserves the redox energy in a proton gradient. The protein is NAD(P)H-quinone oxidoreductase subunit I, chloroplastic of Eucalyptus globulus subsp. globulus (Tasmanian blue gum).